We begin with the raw amino-acid sequence, 390 residues long: MKTELTVKLHEWEQKAQKRQLRRAEASGATVILNGKPMLNLASNNYLGLADDRRLIEAGCEAMRAYGAGAGASRLVVGNHPLYERAEAALKQWKKAEAALIFNSGYTANIGVLTALIGRDDLVFSDKLNHASLIDGIRLSKAACFRYRHHDIDQLESLLKQSPPAKRKWIVTDAVFSMDGDMAPLEELVELKRRYRAVLLVDEAHSGGVFGPNGEGLLHHFGLEKEEDVIAIGTFSKALGSFGAYVTGEPWLVDYLINSARSLIFTTALPPSVLAANEAAIHIVQAEPKRRERLHALSERFRTKLKRLGFDTGGSETPIVPVIVGPNDRAVAMSEQLQEAGIAAVAIRPPTVPEGTARIRFSITAAMTEEDIDMAVDCIALAGKRIGLIS.

Position 19 (Arg-19) interacts with substrate. 105 to 106 (GY) contributes to the pyridoxal 5'-phosphate binding site. His-130 provides a ligand contact to substrate. Pyridoxal 5'-phosphate-binding positions include Ser-177, 202–205 (DEAH), and 234–237 (TFSK). N6-(pyridoxal phosphate)lysine is present on Lys-237. Thr-351 contacts substrate.

The protein belongs to the class-II pyridoxal-phosphate-dependent aminotransferase family. BioF subfamily. In terms of assembly, homodimer. The cofactor is pyridoxal 5'-phosphate.

It catalyses the reaction 6-carboxyhexanoyl-[ACP] + L-alanine + H(+) = (8S)-8-amino-7-oxononanoate + holo-[ACP] + CO2. It participates in cofactor biosynthesis; biotin biosynthesis. Catalyzes the decarboxylative condensation of pimeloyl-[acyl-carrier protein] and L-alanine to produce 8-amino-7-oxononanoate (AON), [acyl-carrier protein], and carbon dioxide. The protein is Putative 8-amino-7-oxononanoate synthase (bioF) of Geobacillus kaustophilus (strain HTA426).